The primary structure comprises 332 residues: L-lactate dehydrogenase A chain (332 aa).

NAD(+) is bound by residues 29–57 (GAVG…IEDK) and arginine 99. 3 residues coordinate substrate: arginine 106, asparagine 138, and arginine 169. Asparagine 138 contributes to the NAD(+) binding site. The active-site Proton acceptor is the histidine 193. Residue threonine 248 participates in substrate binding.

The protein belongs to the LDH/MDH superfamily. LDH family. As to quaternary structure, homotetramer.

It localises to the cytoplasm. The enzyme catalyses (S)-lactate + NAD(+) = pyruvate + NADH + H(+). Its pathway is fermentation; pyruvate fermentation to lactate; (S)-lactate from pyruvate: step 1/1. Functionally, interconverts simultaneously and stereospecifically pyruvate and lactate with concomitant interconversion of NADH and NAD(+). In Sceloporus woodi (Florida scrub lizard), this protein is L-lactate dehydrogenase A chain (LDHA).